The primary structure comprises 355 residues: tRNA-specific 2-thiouridylase MnmA (355 aa).

ATP contacts are provided by residues 6–13 (LLSGGVDS) and leucine 33. The active-site Nucleophile is the cysteine 100. Cysteine 100 and cysteine 195 are joined by a disulfide. Glycine 123 lines the ATP pocket. Residues 145–147 (KDQ) are interaction with tRNA. Cysteine 195 acts as the Cysteine persulfide intermediate in catalysis.

This sequence belongs to the MnmA/TRMU family.

The protein localises to the cytoplasm. The catalysed reaction is S-sulfanyl-L-cysteinyl-[protein] + uridine(34) in tRNA + AH2 + ATP = 2-thiouridine(34) in tRNA + L-cysteinyl-[protein] + A + AMP + diphosphate + H(+). Catalyzes the 2-thiolation of uridine at the wobble position (U34) of tRNA, leading to the formation of s(2)U34. The protein is tRNA-specific 2-thiouridylase MnmA of Borreliella burgdorferi (strain ATCC 35210 / DSM 4680 / CIP 102532 / B31) (Borrelia burgdorferi).